The chain runs to 328 residues: RNA-binding motif protein, X-linked 2 (328 aa).

A Glycyl lysine isopeptide (Lys-Gly) (interchain with G-Cter in SUMO2) cross-link involves residue K8. The RRM domain maps to 36-114; that stretch reads AWIFLGGLPY…RTIRVDHVAN (79 aa). The tract at residues 118 to 328 is disordered; it reads PQESEDVDDV…SFHASDRRHY (211 aa). T140 carries the post-translational modification Phosphothreonine. S149 is subject to Phosphoserine. Positions 157–172 are enriched in basic residues; that stretch reads TKKPKKDKKEKKKKKE. 3 stretches are compositionally biased toward basic and acidic residues: residues 192-219, 236-247, and 255-273; these read TVKETDEQSAKKHSSKPSERAQKSECRE, GRAEEPEWEAKK, and KPSSRREGEEKSRDKDRGR. Residue K246 forms a Glycyl lysine isopeptide (Lys-Gly) (interchain with G-Cter in SUMO2) linkage. At S274 the chain carries Phosphoserine. Positions 291–314 are enriched in basic residues; that stretch reads HRSRSRSRSRSPDRSHRHKKHRYS. Basic and acidic residues predominate over residues 315–328; that stretch reads HERESFHASDRRHY.

It belongs to the IST3 family. Part of the activated spliceosome B/catalytic step 1 spliceosome, one of the forms of the spliceosome which has a well-formed active site but still cannot catalyze the branching reaction and is composed of at least 52 proteins, the U2, U5 and U6 snRNAs and the pre-mRNA. Component of the minor spliceosome, which splices U12-type introns.

It localises to the nucleus. Functionally, involved in pre-mRNA splicing as component of the activated spliceosome. As a component of the minor spliceosome, involved in the splicing of U12-type introns in pre-mRNAs. In Rattus norvegicus (Rat), this protein is RNA-binding motif protein, X-linked 2 (Rbmx2).